A 288-amino-acid chain; its full sequence is Energy-coupling factor transporter ATP-binding protein EcfA2 (288 aa).

The region spanning 2 to 244 is the ABC transporter domain; the sequence is IKFEKVNYTY…VDFLKAHELG (243 aa). An ATP-binding site is contributed by 39–46; sequence GHTGSGKS.

Belongs to the ABC transporter superfamily. Energy-coupling factor EcfA family. Forms a stable energy-coupling factor (ECF) transporter complex composed of 2 membrane-embedded substrate-binding proteins (S component), 2 ATP-binding proteins (A component) and 2 transmembrane proteins (T component).

The protein localises to the cell membrane. Functionally, ATP-binding (A) component of a common energy-coupling factor (ECF) ABC-transporter complex. Unlike classic ABC transporters this ECF transporter provides the energy necessary to transport a number of different substrates. This is Energy-coupling factor transporter ATP-binding protein EcfA2 from Lactococcus lactis subsp. lactis (strain IL1403) (Streptococcus lactis).